The sequence spans 714 residues: Transcription activator of gluconeogenesis UREG_00958 (714 aa).

A disordered region spans residues 1–71 (MTSNARNGPL…NAKDPLRPRR (71 aa)). A compositionally biased stretch (polar residues) spans 38–62 (ESQTQVENSSTKQPNGQTKPMSASN). The zn(2)-C6 fungal-type DNA-binding region spans 78-106 (CFACQRAHLTCGDERPCQRCIKRGIQNSC). Disordered stretches follow at residues 176-228 (SLSQ…NASG), 274-312 (GAGDTPPSDSATQHGSVGRNGSGTFAPGSNFGESPTAQP), and 539-567 (NTGGSSGSTSGTSSRGSFTPRAGMEVNPS). Residues 191 to 228 (FPSQSPVSPTFSITANSATSGNQNMPSSLPASNGNASG) show a composition bias toward polar residues. Residues 545–555 (GSTSGTSSRGS) show a composition bias toward low complexity.

Belongs to the ERT1/acuK family.

It is found in the nucleus. Functionally, transcription factor which regulates nonfermentable carbon utilization. Activator of gluconeogenetic genes. The protein is Transcription activator of gluconeogenesis UREG_00958 of Uncinocarpus reesii (strain UAMH 1704).